Here is a 358-residue protein sequence, read N- to C-terminus: Replication-associated protein (358 aa).

One can recognise a CRESS-DNA virus Rep endonuclease domain in the interval 7 to 115 (RVQAKNVFLT…DGDTVEWGQF (109 aa)). An RCR-1 motif is present at residues 14 to 17 (FLTY). Residues Glu48, His56, and His58 each coordinate a divalent metal cation. An RCR-2 motif is present at residues 56–58 (HLH). Tyr102 (for DNA cleavage activity) is an active-site residue. The short motif at 102 to 105 (YLDK) is the RCR-3 element. Asp106 provides a ligand contact to a divalent metal cation. Positions 142 to 152 (KSEALNVIREL) are binding to RBR1. Residues 155–175 (KDFVLQFHNLNSNLDRIFQEP) are oligomerization. 220-227 (GDSRTGKT) is a binding site for ATP.

Belongs to the geminiviridae Rep protein family. As to quaternary structure, homooligomer. Interacts with the replication enhancer protein (REn). Interacts with host retinoblastoma-related protein 1 (RBR1), and may thereby induce the transcription of host replicative enzymes even if the cell is not dividing anymore. Interacts with host PCNA. Interacts with host SCE1 protein. Mg(2+) serves as cofactor. Mn(2+) is required as a cofactor.

Its subcellular location is the host nucleus. In terms of biological role, essential for the replication of viral ssDNA. The closed circular ssDNA genome is first converted to a superhelical dsDNA. Rep binds a specific region at the genome origin of replication. It introduces an endonucleolytic nick within the conserved sequence 5'-TAATATTAC-3' in the intergenic region of the genome present in all geminiviruses, thereby initiating the rolling circle replication (RCR). Following cleavage, binds covalently to the 5'-phosphate of DNA as a tyrosyl ester. The cleavage gives rise to a free 3'-OH that serves as a primer for the cellular DNA polymerase. The polymerase synthesizes the (+) strand DNA by rolling circle mechanism. After one round of replication, a Rep-catalyzed nucleotidyl transfer reaction releases a circular single-stranded virus genome, thereby terminating the replication. Displays origin-specific DNA cleavage, nucleotidyl transferase, ATPase and helicase activities. In Hewittia sublobata (Coralbush), this protein is Replication-associated protein.